The following is a 203-amino-acid chain: Peptide deformylase (203 aa).

2 residues coordinate Fe cation: C121 and H163. E164 is a catalytic residue. Fe cation is bound at residue H167.

Belongs to the polypeptide deformylase family. Fe(2+) is required as a cofactor.

It catalyses the reaction N-terminal N-formyl-L-methionyl-[peptide] + H2O = N-terminal L-methionyl-[peptide] + formate. Removes the formyl group from the N-terminal Met of newly synthesized proteins. Requires at least a dipeptide for an efficient rate of reaction. N-terminal L-methionine is a prerequisite for activity but the enzyme has broad specificity at other positions. The sequence is that of Peptide deformylase from Prochlorococcus marinus (strain SARG / CCMP1375 / SS120).